The primary structure comprises 215 residues: Cytochrome b6 (215 aa).

Residues 32–52 (IFYCLGGITLTCFLVQVATGF) traverse the membrane as a helical segment. Residue Cys35 participates in heme c binding. Heme b is bound by residues His86 and His100. 3 helical membrane-spanning segments follow: residues 90–110 (ASMMVLMMILHVFRVYLTGGF), 116–136 (LTWVTGVVLGVLTASFGVTGY), and 186–206 (LHTFVLPLLTAVFMLMHFSMI). Residues His187 and His202 each contribute to the heme b site.

The protein belongs to the cytochrome b family. PetB subfamily. As to quaternary structure, the 4 large subunits of the cytochrome b6-f complex are cytochrome b6, subunit IV (17 kDa polypeptide, PetD), cytochrome f and the Rieske protein, while the 4 small subunits are PetG, PetL, PetM and PetN. The complex functions as a dimer. Heme b is required as a cofactor. Requires heme c as cofactor.

Its subcellular location is the plastid. It is found in the chloroplast thylakoid membrane. Functionally, component of the cytochrome b6-f complex, which mediates electron transfer between photosystem II (PSII) and photosystem I (PSI), cyclic electron flow around PSI, and state transitions. This is Cytochrome b6 from Lotus japonicus (Lotus corniculatus var. japonicus).